Here is a 300-residue protein sequence, read N- to C-terminus: Cytochrome b (300 aa).

Helical transmembrane passes span 28 to 48, 72 to 94, 107 to 127, 168 to 187, 223 to 243, and 279 to 299; these read YGFL…LLAL, WCFR…LHIL, SWIS…YGYV, FFVF…FGIL, IPNK…LFLL, and IGCQ…YIIL. Heme b contacts are provided by His-78 and His-92.

This sequence belongs to the cytochrome b family. In terms of assembly, the main subunits of complex b-c1 are: cytochrome b, cytochrome c1 and the Rieske protein. Requires heme b as cofactor.

It localises to the mitochondrion inner membrane. In terms of biological role, component of the ubiquinol-cytochrome c reductase complex (complex III or cytochrome b-c1 complex) that is part of the mitochondrial respiratory chain. The b-c1 complex mediates electron transfer from ubiquinol to cytochrome c. Contributes to the generation of a proton gradient across the mitochondrial membrane that is then used for ATP synthesis. This Plasmodium gallinaceum protein is Cytochrome b (MT-CYB).